Reading from the N-terminus, the 363-residue chain is Putative replication factor C small subunit L510 (363 aa).

47 to 54 (GPPGTGKT) serves as a coordination point for ATP.

This sequence belongs to the activator 1 small subunits family. RfcS subfamily.

Its function is as follows. Part of the RFC clamp loader complex which loads the PCNA sliding clamp onto DNA. The protein is Putative replication factor C small subunit L510 of Acanthamoeba polyphaga mimivirus (APMV).